Here is a 252-residue protein sequence, read N- to C-terminus: Imidazole glycerol phosphate synthase subunit HisF (252 aa).

Catalysis depends on residues aspartate 11 and aspartate 130.

The protein belongs to the HisA/HisF family. In terms of assembly, heterodimer of HisH and HisF.

Its subcellular location is the cytoplasm. The catalysed reaction is 5-[(5-phospho-1-deoxy-D-ribulos-1-ylimino)methylamino]-1-(5-phospho-beta-D-ribosyl)imidazole-4-carboxamide + L-glutamine = D-erythro-1-(imidazol-4-yl)glycerol 3-phosphate + 5-amino-1-(5-phospho-beta-D-ribosyl)imidazole-4-carboxamide + L-glutamate + H(+). The protein operates within amino-acid biosynthesis; L-histidine biosynthesis; L-histidine from 5-phospho-alpha-D-ribose 1-diphosphate: step 5/9. In terms of biological role, IGPS catalyzes the conversion of PRFAR and glutamine to IGP, AICAR and glutamate. The HisF subunit catalyzes the cyclization activity that produces IGP and AICAR from PRFAR using the ammonia provided by the HisH subunit. This chain is Imidazole glycerol phosphate synthase subunit HisF, found in Staphylococcus aureus (strain USA300).